Consider the following 154-residue polypeptide: Ribosomal RNA large subunit methyltransferase H (154 aa).

Residues G103 and 122-127 (FSKLTF) each bind S-adenosyl-L-methionine.

Belongs to the RNA methyltransferase RlmH family. As to quaternary structure, homodimer.

It localises to the cytoplasm. The catalysed reaction is pseudouridine(1915) in 23S rRNA + S-adenosyl-L-methionine = N(3)-methylpseudouridine(1915) in 23S rRNA + S-adenosyl-L-homocysteine + H(+). Functionally, specifically methylates the pseudouridine at position 1915 (m3Psi1915) in 23S rRNA. The protein is Ribosomal RNA large subunit methyltransferase H of Caldicellulosiruptor bescii (strain ATCC BAA-1888 / DSM 6725 / KCTC 15123 / Z-1320) (Anaerocellum thermophilum).